A 1295-amino-acid polypeptide reads, in one-letter code: Phosphoribosylformylglycinamidine synthase (1295 aa).

Positions 304–326 (WPGAATGSGGEIRDEGATGRGAK) are disordered. ATP-binding positions include 306-317 (GAATGSGGEIRD), 385-387 (TGY), and A677. 4 residues coordinate Mg(2+): D678, E717, N721, and D884. Residues 995 to 1012 (LRDNPESADQEHASRQDD) show a composition bias toward basic and acidic residues. The segment at 995–1017 (LRDNPESADQEHASRQDDNDPGL) is disordered. In terms of domain architecture, Glutamine amidotransferase type-1 spans 1042-1295 (VAVLREQGVN…LFRNARKQLG (254 aa)). C1135 acts as the Nucleophile in catalysis. Active-site residues include H1260 and E1262.

It in the N-terminal section; belongs to the FGAMS family. As to quaternary structure, monomer.

It localises to the cytoplasm. The catalysed reaction is N(2)-formyl-N(1)-(5-phospho-beta-D-ribosyl)glycinamide + L-glutamine + ATP + H2O = 2-formamido-N(1)-(5-O-phospho-beta-D-ribosyl)acetamidine + L-glutamate + ADP + phosphate + H(+). The protein operates within purine metabolism; IMP biosynthesis via de novo pathway; 5-amino-1-(5-phospho-D-ribosyl)imidazole from N(2)-formyl-N(1)-(5-phospho-D-ribosyl)glycinamide: step 1/2. In terms of biological role, phosphoribosylformylglycinamidine synthase involved in the purines biosynthetic pathway. Catalyzes the ATP-dependent conversion of formylglycinamide ribonucleotide (FGAR) and glutamine to yield formylglycinamidine ribonucleotide (FGAM) and glutamate. This chain is Phosphoribosylformylglycinamidine synthase, found in Sodalis glossinidius (strain morsitans).